The sequence spans 385 residues: A-type ATP synthase subunit C (385 aa).

Belongs to the V-ATPase V0D/AC39 subunit family. Has multiple subunits with at least A(3), B(3), C, D, E, F, H, I and proteolipid K(x).

The protein resides in the cell membrane. Component of the A-type ATP synthase that produces ATP from ADP in the presence of a proton gradient across the membrane. The sequence is that of A-type ATP synthase subunit C from Methanothermobacter thermautotrophicus (strain ATCC 29096 / DSM 1053 / JCM 10044 / NBRC 100330 / Delta H) (Methanobacterium thermoautotrophicum).